Here is a 222-residue protein sequence, read N- to C-terminus: Glutathione S-transferase A3 (222 aa).

Residue Ala2 is modified to N-acetylalanine. The GST N-terminal domain occupies 3–83 (GKPKLHYFNG…YIASKYNLYG (81 aa)). Residue Lys4 is modified to N6-succinyllysine. Glutathione-binding positions include Tyr9, Arg45, 54-55 (QV), and 67-68 (QT). In terms of domain architecture, GST C-terminal spans 85-207 (DIKERALIDM…LQPGSPRKPP (123 aa)).

It belongs to the GST superfamily. Alpha family. Homodimer.

Its subcellular location is the cytoplasm. The enzyme catalyses RX + glutathione = an S-substituted glutathione + a halide anion + H(+). It catalyses the reaction androst-5-ene-3,17-dione = androst-4-ene-3,17-dione. It carries out the reaction pregn-5-ene-3,20-dione = progesterone. Conjugation of reduced glutathione to a wide number of exogenous and endogenous hydrophobic electrophiles. Catalyzes isomerization reactions that contribute to the biosynthesis of steroid hormones. Efficiently catalyze obligatory double-bond isomerizations of delta(5)-androstene-3,17-dione and delta(5)-pregnene-3,20-dione, precursors to testosterone and progesterone, respectively. Has substantial activity toward aflatoxin B1-8,9-epoxide. The protein is Glutathione S-transferase A3 of Homo sapiens (Human).